The chain runs to 233 residues: MASLDRVKVLVLGDSGVGKSSLVHLLCQNQVLGNPSWTVGCSVDVRVHDYREGTPEEKAFYIELWDVGGSVGSASSVKSTRAVFYNSVNGIILVHDLTNKKSSQNLYRWSLEALSKDSSPTGIIVSNGDYDREQFAENAVPLLLIGTKFDQIPENKRNDVLTRTAFLSEDFNAEEINLDCTNPRYLAAGSSNAVKLSRFFDKVIEKRYFTRDPSQMQSFTDRRRFNFKSLHSD.

Positions 1 to 233 are small GTPase-like; the sequence is MASLDRVKVL…RFNFKSLHSD (233 aa). GTP-binding positions include 16–21, 148–150, and 179–180; these read GVGKSS, KFD, and DC.

This sequence belongs to the small GTPase superfamily. Rab family. In terms of assembly, homodimer.

Required for KRAS signaling regulation and modulation of cell proliferation. Regulator of KRAS prenylation, and probably prenylation of other small GTPases. Required for lymphocyte development and function. Not required for myeloid cell development. This chain is Rab-like protein 3 (rabl3), found in Danio rerio (Zebrafish).